A 27-amino-acid chain; its full sequence is Fructokinase (27 aa).

This sequence belongs to the ROK (NagC/XylR) family. In terms of assembly, homodimer. Mg(2+) is required as a cofactor.

It catalyses the reaction D-fructose + ATP = D-fructose 6-phosphate + ADP + H(+). With respect to regulation, inhibition by zinc ions. This is Fructokinase from Fusobacterium mortiferum.